A 345-amino-acid chain; its full sequence is N-acetyl-gamma-glutamyl-phosphate reductase (345 aa).

Residue Cys-151 is part of the active site.

The protein belongs to the NAGSA dehydrogenase family. Type 1 subfamily.

The protein localises to the cytoplasm. It carries out the reaction N-acetyl-L-glutamate 5-semialdehyde + phosphate + NADP(+) = N-acetyl-L-glutamyl 5-phosphate + NADPH + H(+). It functions in the pathway amino-acid biosynthesis; L-arginine biosynthesis; N(2)-acetyl-L-ornithine from L-glutamate: step 3/4. In terms of biological role, catalyzes the NADPH-dependent reduction of N-acetyl-5-glutamyl phosphate to yield N-acetyl-L-glutamate 5-semialdehyde. This is N-acetyl-gamma-glutamyl-phosphate reductase from Clostridium novyi (strain NT).